The following is a 129-amino-acid chain: MLSYCLLVTGPAYGTQQASSALQFAQALLAEGHKLESVFFYREGVLNANQLTSPANDEFDLVRGWQQLGDVHQVALNVCVAAALRRGIADSQQATQLNLVGANLQPGFILSGLGELAQSVLTYDRVIQF.

Cys-79 acts as the Cysteine persulfide intermediate in catalysis.

It belongs to the DsrE/TusD family. Heterohexamer, formed by a dimer of trimers. The hexameric TusBCD complex contains 2 copies each of TusB, TusC and TusD. The TusBCD complex interacts with TusE.

The protein localises to the cytoplasm. In terms of biological role, part of a sulfur-relay system required for 2-thiolation of 5-methylaminomethyl-2-thiouridine (mnm(5)s(2)U) at tRNA wobble positions. Accepts sulfur from TusA and transfers it in turn to TusE. This chain is Sulfurtransferase TusD, found in Pectobacterium atrosepticum (strain SCRI 1043 / ATCC BAA-672) (Erwinia carotovora subsp. atroseptica).